A 567-amino-acid polypeptide reads, in one-letter code: Proline--tRNA ligase (567 aa).

It belongs to the class-II aminoacyl-tRNA synthetase family. ProS type 1 subfamily. In terms of assembly, homodimer.

Its subcellular location is the cytoplasm. It catalyses the reaction tRNA(Pro) + L-proline + ATP = L-prolyl-tRNA(Pro) + AMP + diphosphate. Catalyzes the attachment of proline to tRNA(Pro) in a two-step reaction: proline is first activated by ATP to form Pro-AMP and then transferred to the acceptor end of tRNA(Pro). As ProRS can inadvertently accommodate and process non-cognate amino acids such as alanine and cysteine, to avoid such errors it has two additional distinct editing activities against alanine. One activity is designated as 'pretransfer' editing and involves the tRNA(Pro)-independent hydrolysis of activated Ala-AMP. The other activity is designated 'posttransfer' editing and involves deacylation of mischarged Ala-tRNA(Pro). The misacylated Cys-tRNA(Pro) is not edited by ProRS. This is Proline--tRNA ligase from Staphylococcus aureus (strain MRSA252).